A 236-amino-acid chain; its full sequence is NAD(P)H-hydrate epimerase (236 aa).

In terms of domain architecture, YjeF N-terminal spans 11-217 (AAALDQELMS…AIASKYGFEV (207 aa)). 61-65 (NNGGD) contacts (6S)-NADPHX. 2 residues coordinate K(+): N62 and D123. (6S)-NADPHX-binding positions include 127–133 (GFSFSGE) and D156. S159 serves as a coordination point for K(+).

It belongs to the NnrE/AIBP family. It depends on K(+) as a cofactor.

The protein resides in the cytoplasm. Its subcellular location is the mitochondrion. The catalysed reaction is (6R)-NADHX = (6S)-NADHX. It carries out the reaction (6R)-NADPHX = (6S)-NADPHX. Catalyzes the epimerization of the S- and R-forms of NAD(P)HX, a damaged form of NAD(P)H that is a result of enzymatic or heat-dependent hydration. This is a prerequisite for the S-specific NAD(P)H-hydrate dehydratase to allow the repair of both epimers of NAD(P)HX. The polypeptide is NAD(P)H-hydrate epimerase (Fusarium vanettenii (strain ATCC MYA-4622 / CBS 123669 / FGSC 9596 / NRRL 45880 / 77-13-4) (Fusarium solani subsp. pisi)).